The primary structure comprises 173 residues: Photosystem I assembly protein Ycf3 (173 aa).

TPR repeat units follow at residues 35–68 (AFSY…EIDP), 72–105 (SYIL…NPSL), and 120–153 (GEQA…APNS).

It belongs to the Ycf3 family.

The protein localises to the plastid. Its subcellular location is the chloroplast thylakoid membrane. Essential for the assembly of the photosystem I (PSI) complex. May act as a chaperone-like factor to guide the assembly of the PSI subunits. This Mesostigma viride (Green alga) protein is Photosystem I assembly protein Ycf3.